The chain runs to 47 residues: Defensin-like protein 2 (47 aa).

4 disulfides stabilise this stretch: Cys-5–Cys-47, Cys-16–Cys-36, Cys-22–Cys-43, and Cys-26–Cys-45.

This sequence belongs to the DEFL family.

Functionally, fabatins have antibacterial activity against Gram-positive and Gram-negative bacteria. High activity against P.aeruginosa. No activity against S.cerevisiae and C.albicans. This Vicia faba (Broad bean) protein is Defensin-like protein 2.